The following is a 358-amino-acid chain: tRNA-specific 2-thiouridylase MnmA (358 aa).

ATP-binding positions include 8–15 (GLSGGVDS) and Met-34. Residues 94–96 (NPD) form an interaction with target base in tRNA region. Residue Cys-99 is the Nucleophile of the active site. Cys-99 and Cys-196 are disulfide-bonded. ATP is bound at residue Gly-123. Residues 146–148 (KDQ) form an interaction with tRNA region. Cys-196 (cysteine persulfide intermediate) is an active-site residue. The segment at 308–309 (RY) is interaction with tRNA.

This sequence belongs to the MnmA/TRMU family.

Its subcellular location is the cytoplasm. It carries out the reaction S-sulfanyl-L-cysteinyl-[protein] + uridine(34) in tRNA + AH2 + ATP = 2-thiouridine(34) in tRNA + L-cysteinyl-[protein] + A + AMP + diphosphate + H(+). Functionally, catalyzes the 2-thiolation of uridine at the wobble position (U34) of tRNA, leading to the formation of s(2)U34. The protein is tRNA-specific 2-thiouridylase MnmA of Thiobacillus denitrificans (strain ATCC 25259 / T1).